We begin with the raw amino-acid sequence, 433 residues long: 3-deoxy-D-manno-octulosonic acid transferase (433 aa).

Residues 11–31 (TFLYDCFLIFAFMVGLPRILY) form a helical; Signal-anchor membrane-spanning segment. The Proton acceptor role is filled by glutamate 70. CMP contacts are provided by residues 277–278 (PR), 317–319 (IGW), and 344–347 (NLLE).

Belongs to the glycosyltransferase group 1 family. Glycosyltransferase 30 subfamily.

The protein localises to the cell inner membrane. The enzyme catalyses lipid IVA (E. coli) + CMP-3-deoxy-beta-D-manno-octulosonate = alpha-Kdo-(2-&gt;6)-lipid IVA (E. coli) + CMP + H(+). It catalyses the reaction alpha-Kdo-(2-&gt;6)-lipid IVA (E. coli) + CMP-3-deoxy-beta-D-manno-octulosonate = alpha-Kdo-(2-&gt;4)-alpha-Kdo-(2-&gt;6)-lipid IVA (E. coli) + CMP + H(+). It carries out the reaction alpha-Kdo-(2-&gt;4)-alpha-Kdo-(2-&gt;6)-lipid IVA (E. coli) + CMP-3-deoxy-beta-D-manno-octulosonate = alpha-Kdo-(2-&gt;8)-alpha-Kdo-(2-&gt;4)-alpha-Kdo-(2-&gt;6)-lipid IVA (E. coli) + CMP + H(+). The catalysed reaction is alpha-Kdo-(2-&gt;8)-alpha-Kdo-(2-&gt;4)-alpha-Kdo-(2-&gt;6)-lipid IVA (E. coli) + CMP-3-deoxy-beta-D-manno-octulosonate = alpha-Kdo-(2-&gt;8)-[alpha-Kdo-(2-&gt;4)]-alpha-Kdo-(2-&gt;4)-alpha-Kdo-(2-&gt;6)-lipid IVA + CMP + H(+). It functions in the pathway bacterial outer membrane biogenesis; LPS core biosynthesis. Functionally, involved in lipopolysaccharide (LPS) biosynthesis. Catalyzes the transfer of predominantly four 3-deoxy-D-manno-octulosonate (Kdo) residues from CMP-Kdo to lipid IV(A), the tetraacyldisaccharide-1,4'-bisphosphate precursor of lipid A. Thus generates the genus-specific LPS epitope of Chlamydia, composed of the trisaccharide alpha-Kdo-(2-&gt;8)-alpha-Kdo-(2-&gt;4)-alpha-Kdo. The polypeptide is 3-deoxy-D-manno-octulosonic acid transferase (waaA) (Chlamydophila psittaci (strain ATCC VR-125 / 6BC) (Chlamydia psittaci)).